A 191-amino-acid polypeptide reads, in one-letter code: Putative endogenous retrovirus group K member 11-1 Env polyprotein (191 aa).

Residues 1–191 are truncated surface protein; sequence MPGAIDDHCP…DITLHPQGLV (191 aa).

This sequence belongs to the beta type-B retroviral envelope protein family. HERV class-II K(HML-8) env subfamily. As to expression, cerebellum and testis.

It is found in the virion. Its function is as follows. Retroviral envelope proteins mediate receptor recognition and membrane fusion during early infection. Endogenous envelope proteins may have kept, lost or modified their original function during evolution. The polypeptide is Putative endogenous retrovirus group K member 11-1 Env polyprotein (ERVK11-1) (Homo sapiens (Human)).